A 72-amino-acid chain; its full sequence is Translation initiation factor IF-1 (72 aa).

The S1-like domain occupies 1–72; the sequence is MSKEDLIEFT…SKGRITFRFK (72 aa).

It belongs to the IF-1 family. As to quaternary structure, component of the 30S ribosomal translation pre-initiation complex which assembles on the 30S ribosome in the order IF-2 and IF-3, IF-1 and N-formylmethionyl-tRNA(fMet); mRNA recruitment can occur at any time during PIC assembly.

Its subcellular location is the cytoplasm. In terms of biological role, one of the essential components for the initiation of protein synthesis. Stabilizes the binding of IF-2 and IF-3 on the 30S subunit to which N-formylmethionyl-tRNA(fMet) subsequently binds. Helps modulate mRNA selection, yielding the 30S pre-initiation complex (PIC). Upon addition of the 50S ribosomal subunit IF-1, IF-2 and IF-3 are released leaving the mature 70S translation initiation complex. This chain is Translation initiation factor IF-1, found in Gluconobacter oxydans (strain 621H) (Gluconobacter suboxydans).